Here is a 409-residue protein sequence, read N- to C-terminus: uncharacterized protein (409 aa).

Residues 1–26 form the signal peptide; it reads MKKELLASLVLCLSLSPLVSTNEVFA.

This is an uncharacterized protein from Bacillus subtilis (strain 168).